The primary structure comprises 142 residues: Large ribosomal subunit protein uL11 (142 aa).

Belongs to the universal ribosomal protein uL11 family. In terms of assembly, part of the ribosomal stalk of the 50S ribosomal subunit. Interacts with L10 and the large rRNA to form the base of the stalk. L10 forms an elongated spine to which L12 dimers bind in a sequential fashion forming a multimeric L10(L12)X complex. In terms of processing, one or more lysine residues are methylated.

Forms part of the ribosomal stalk which helps the ribosome interact with GTP-bound translation factors. This Nocardioides sp. (strain ATCC BAA-499 / JS614) protein is Large ribosomal subunit protein uL11.